The primary structure comprises 343 residues: S-adenosylmethionine:tRNA ribosyltransferase-isomerase (343 aa).

Belongs to the QueA family. In terms of assembly, monomer.

It is found in the cytoplasm. It carries out the reaction 7-aminomethyl-7-carbaguanosine(34) in tRNA + S-adenosyl-L-methionine = epoxyqueuosine(34) in tRNA + adenine + L-methionine + 2 H(+). The protein operates within tRNA modification; tRNA-queuosine biosynthesis. Functionally, transfers and isomerizes the ribose moiety from AdoMet to the 7-aminomethyl group of 7-deazaguanine (preQ1-tRNA) to give epoxyqueuosine (oQ-tRNA). This chain is S-adenosylmethionine:tRNA ribosyltransferase-isomerase, found in Hydrogenobaculum sp. (strain Y04AAS1).